Reading from the N-terminus, the 103-residue chain is Large ribosomal subunit protein bL21 (103 aa).

It belongs to the bacterial ribosomal protein bL21 family. As to quaternary structure, part of the 50S ribosomal subunit. Contacts protein L20.

Its function is as follows. This protein binds to 23S rRNA in the presence of protein L20. The sequence is that of Large ribosomal subunit protein bL21 from Erwinia tasmaniensis (strain DSM 17950 / CFBP 7177 / CIP 109463 / NCPPB 4357 / Et1/99).